We begin with the raw amino-acid sequence, 362 residues long: Cationic peroxidase SPC4 (362 aa).

An N-terminal signal peptide occupies residues 1–31 (MSRAPTLAAAAAVAAVVLICSSSTATAADGN). Disulfide bonds link Cys50–Cys131, Cys83–Cys88, Cys138–Cys333, and Cys218–Cys245. Catalysis depends on His81, which acts as the Proton acceptor. 5 residues coordinate Ca(2+): Asp82, Val85, Gly87, Asp89, and Ser91. The N-linked (GlcNAc...) asparagine glycan is linked to Asn109. Thr111 provides a ligand contact to (indol-3-yl)acetate. Pro181 is a binding site for substrate. His211 lines the heme b pocket. Position 212 (Thr212) interacts with Ca(2+). N-linked (GlcNAc...) asparagine glycosylation is present at Asn234. The Ca(2+) site is built by Asp257, Thr260, Ala263, and Asp265. A glycan (N-linked (GlcNAc...) asparagine) is linked at Asn332.

The protein belongs to the peroxidase family. Classical plant (class III) peroxidase subfamily. Monomer. Heme b is required as a cofactor. Ca(2+) serves as cofactor. Post-translationally, the proportions of glycoforms I and II are 35% and 65% respectively. Present in germinated and ungerminated grain, seedlings, and leaves and stem of the mature plant.

The protein localises to the secreted. The catalysed reaction is 2 a phenolic donor + H2O2 = 2 a phenolic radical donor + 2 H2O. Functionally, removal of H(2)O(2), oxidation of toxic reductants, biosynthesis and degradation of lignin, suberization, auxin catabolism, response to environmental stresses such as wounding, pathogen attack and oxidative stress. These functions might be dependent on each isozyme/isoform in each plant tissue. Has a high preference for hydroxycinnamates as substrates. Substrate preference is ferulic acid &gt; p-coumaric acid &gt; N-acetyl tyrosine methyl ester &gt; N-acetyl-tyrosine &gt; tyrosine &gt; catechol &gt; Gly-Tyr-Gly. May be involved in the formation of diferulate linkages in the plant cell wall. This is Cationic peroxidase SPC4 from Sorghum bicolor (Sorghum).